Reading from the N-terminus, the 156-residue chain is Small ribosomal subunit protein uS7 (156 aa).

This sequence belongs to the universal ribosomal protein uS7 family. In terms of assembly, part of the 30S ribosomal subunit. Contacts proteins S9 and S11.

Functionally, one of the primary rRNA binding proteins, it binds directly to 16S rRNA where it nucleates assembly of the head domain of the 30S subunit. Is located at the subunit interface close to the decoding center, probably blocks exit of the E-site tRNA. In Streptococcus pneumoniae serotype 4 (strain ATCC BAA-334 / TIGR4), this protein is Small ribosomal subunit protein uS7.